We begin with the raw amino-acid sequence, 199 residues long: uncharacterized protein (199 aa).

It to U.parvum UU376.

This is an uncharacterized protein from Ureaplasma parvum serovar 3 (strain ATCC 700970).